We begin with the raw amino-acid sequence, 290 residues long: N-acetylmannosamine kinase (290 aa).

ATP-binding positions include 6-13 and 132-139; these read ALDIGGTK and GVGGGIIL. Zn(2+) is bound by residues His-156, Cys-166, Cys-168, and Cys-173.

This sequence belongs to the ROK (NagC/XylR) family. NanK subfamily. As to quaternary structure, homodimer.

The catalysed reaction is an N-acyl-D-mannosamine + ATP = an N-acyl-D-mannosamine 6-phosphate + ADP + H(+). The protein operates within amino-sugar metabolism; N-acetylneuraminate degradation; D-fructose 6-phosphate from N-acetylneuraminate: step 2/5. Functionally, catalyzes the phosphorylation of N-acetylmannosamine (ManNAc) to ManNAc-6-P. In Yersinia pestis (strain Pestoides F), this protein is N-acetylmannosamine kinase.